We begin with the raw amino-acid sequence, 211 residues long: Uracil phosphoribosyltransferase (211 aa).

5-phospho-alpha-D-ribose 1-diphosphate is bound by residues arginine 79, arginine 104, and 131 to 139; that span reads DPMLATGGS. Uracil-binding positions include isoleucine 196 and 201–203; that span reads GDA. Aspartate 202 contributes to the 5-phospho-alpha-D-ribose 1-diphosphate binding site.

This sequence belongs to the UPRTase family. It depends on Mg(2+) as a cofactor.

It catalyses the reaction UMP + diphosphate = 5-phospho-alpha-D-ribose 1-diphosphate + uracil. It participates in pyrimidine metabolism; UMP biosynthesis via salvage pathway; UMP from uracil: step 1/1. Its activity is regulated as follows. Allosterically activated by GTP. Its function is as follows. Catalyzes the conversion of uracil and 5-phospho-alpha-D-ribose 1-diphosphate (PRPP) to UMP and diphosphate. This chain is Uracil phosphoribosyltransferase, found in Lactococcus lactis subsp. cremoris (strain MG1363).